The chain runs to 1065 residues: Ceruloplasmin (1065 aa).

An N-terminal signal peptide occupies residues Met1 to Ala19. Plastocyanin-like domains are found at residues Lys20–Cys200 and Lys209–Cys357. Residues Tyr55, Gly64, and Tyr67 each contribute to the Na(+) site. Cu(2+) is bound by residues His120 and His122. His120 serves as a coordination point for O2. Lys128 is a binding site for Ca(2+). N-linked (GlcNAc...) (complex) asparagine glycosylation is present at Asn138. Ca(2+) is bound by residues Gln143, Asp146, and Asp147. An intrachain disulfide couples Cys174 to Cys200. His180 and His182 together coordinate Cu(2+). Residue His180 coordinates O2. Residue Ser256 participates in Na(+) binding. A disulfide bridge connects residues Cys276 and Cys357. Residues His295, Cys338, and His343 each coordinate Cu(2+). Asn358 and Asn397 each carry an N-linked (GlcNAc...) (complex) asparagine glycan. Plastocyanin-like domains lie at His370–Cys560 and Arg570–Cys718. Residues Phe408, Gly417, and Tyr420 each contribute to the Na(+) site. Cys534 and Cys560 are disulfide-bonded. A glycan (N-linked (GlcNAc...) asparagine) is linked at Asn588. Ser617 contacts Na(+). Cys637 and Cys718 are disulfide-bonded. Cu(2+) contacts are provided by His656, Cys699, His704, and Met709. Cys699 serves as the catalytic Nucleophile; for glutathione peroxidase activity. The residue at position 722 (Ser722) is a Phosphoserine; by FAM20C. Plastocyanin-like domains lie at Gly730–Cys900 and Phe908–Asp1061. The N-linked (GlcNAc...) (complex) asparagine glycan is linked to Asn762. Na(+) contacts are provided by Phe767, Gly776, and Tyr779. The cysteines at positions 874 and 900 are disulfide-linked. N-linked (GlcNAc...) asparagine glycosylation occurs at Asn926. Residue Ser955 participates in Na(+) binding. Residues His994, His997, His999, His1039, Cys1040, His1041, His1045, and Met1050 each coordinate Cu(2+). Residues His997 and His999 each coordinate O2. His1041 lines the O2 pocket.

It belongs to the multicopper oxidase family. Found in a complex with MPO and LTF; interacts directly with MPO and LTF, which allows Fe(3+) incorporation into LTF, activation of CP ferroxidase activity and protection of CP antioxidant properties by MPO. Requires Cu(2+) as cofactor. As to expression, expressed by the liver and secreted in plasma.

It is found in the secreted. It carries out the reaction 4 Fe(2+) + O2 + 4 H(+) = 4 Fe(3+) + 2 H2O. The catalysed reaction is 4 Cu(+) + O2 + 4 H(+) = 4 Cu(2+) + 2 H2O. The enzyme catalyses a hydroperoxide + 2 glutathione = an alcohol + glutathione disulfide + H2O. It catalyses the reaction 4 nitric oxide + O2 + 2 H2O = 4 nitrite + 4 H(+). It carries out the reaction 2 glutathione + H2O2 = glutathione disulfide + 2 H2O. Functionally, multifunctional blue, copper-binding (6-7 atoms per molecule) glycoprotein. It has ferroxidase activity oxidizing Fe(2+) to Fe(3+) without releasing radical oxygen species. It is involved in iron transport across the cell membrane. Copper ions provide a large number of enzymatic activites. Oxidizes highly toxic ferrous ions to the ferric state for further incorporation onto apo-transferrins, catalyzes Cu(+) oxidation and promotes the oxidation of biogenic amines such as norepinephrin and serotonin. Provides Cu(2+) ions for the ascorbate-mediated deaminase degradation of the heparan sulfate chains of GPC1. Has glutathione peroxidase-like activity, can remove both hydrogen peroxide and lipid hydroperoxide in the presence of thiols. Also shows NO-oxidase and NO2 synthase activities that determine endocrine NO homeostasis. This is Ceruloplasmin from Homo sapiens (Human).